A 262-amino-acid chain; its full sequence is Snake venom serine proteinase 9 (262 aa).

Residues 1 to 18 (MVLIRVLANLLILQLSYA) form the signal peptide. Residues 19 to 24 (QKSSEL) constitute a propeptide that is removed on maturation. The region spanning 25–253 (VIGGDECNID…HLDWIQSIIA (229 aa)) is the Peptidase S1 domain. Cystine bridges form between C31/C165, C52/C68, C144/C214, C176/C193, and C204/C229. H67 (charge relay system) is an active-site residue. The N-linked (GlcNAc...) asparagine glycan is linked to N105. D112 (charge relay system) is an active-site residue. S208 serves as the catalytic Charge relay system.

It belongs to the peptidase S1 family. Snake venom subfamily. Monomer. As to expression, expressed by the venom gland.

It localises to the secreted. Its function is as follows. Snake venom serine protease that may act in the hemostasis system of the prey. The polypeptide is Snake venom serine proteinase 9 (Crotalus adamanteus (Eastern diamondback rattlesnake)).